Reading from the N-terminus, the 357-residue chain is Cinnamyl alcohol dehydrogenase 1 (357 aa).

In terms of domain architecture, Enoyl reductase (ER) spans 20 to 348; it reads GILSPYTYTL…KNDVRYRFVV (329 aa). C47 is a Zn(2+) binding site. Residue S49 participates in NADP(+) binding. Zn(2+)-binding residues include H69, E70, C100, C103, C106, C114, and C163. Residues T167, 188 to 193, 211 to 216, T251, G275, and 298 to 300 contribute to the NADP(+) site; these read GLGGVG, SSSDKK, and SFI.

The protein belongs to the zinc-containing alcohol dehydrogenase family. In terms of assembly, homodimer. Zn(2+) serves as cofactor. As to expression, accumulates mainly in the placenta of red fruits, and, to a lower extent, in green fruits placenta, pericarp and seeds.

It is found in the cytoplasm. It catalyses the reaction (E)-cinnamyl alcohol + NADP(+) = (E)-cinnamaldehyde + NADPH + H(+). It carries out the reaction (E)-coniferol + NADP(+) = (E)-coniferaldehyde + NADPH + H(+). The catalysed reaction is (E)-sinapyl alcohol + NADP(+) = (E)-sinapaldehyde + NADPH + H(+). The enzyme catalyses (E)-4-coumaroyl alcohol + NADP(+) = (E)-4-coumaraldehyde + NADPH + H(+). It catalyses the reaction (E)-caffeyl alcohol + NADP(+) = (E)-caffeyl aldehyde + NADPH + H(+). It carries out the reaction vanillin + NADPH + H(+) = 4-hydroxy-3-methoxy-benzenemethanol + NADP(+). It participates in aromatic compound metabolism; phenylpropanoid biosynthesis. With respect to regulation, inhibited, in a concentration-dependent manner, by N-(O-hydroxyphenyl) sulfinamoyltertiobutyl acetate (OHPAS), a specific cinnamyl alcohol dehydrogenase (CAD) inhibitor, as well as by ethylenediaminetetraacetic acid (EDTA), a metalloenzyme inhibitor. In terms of biological role, involved in the biosynthesis of capsinoids natural products (e.g. capsiate), non-pungent alkaloids synthesized from phenylpropanoid intermediates in the placental tissue of sweet chili pepper fruit acting as repellant on herbivorous mammals. Catalyzes the reduction of vanillin to generate vanillyl alcohol, a precursor of capsiate, a non-pungent component that accumulates mainly in the placenta of mature red fruits, but also in green fruits to lower levels. Involved in lignin biosynthesis. Catalyzes the final step specific for the production of lignin monomers. Mediates the conversion of cinnamaldehyde and coniferaldehyde to cinnamyl alcohol and coniferyl alcohol, respectively. Catalyzes the NADPH-dependent reduction of 5-hydroxyconiferaldehyde, sinapaldehyde, 4-coumaraldehyde and caffeyl aldehyde to their respective alcohols. The polypeptide is Cinnamyl alcohol dehydrogenase 1 (Capsicum annuum (Capsicum pepper)).